We begin with the raw amino-acid sequence, 272 residues long: Small ribosomal subunit protein uS2 (272 aa).

The tract at residues 244–272 (EDDYEGAEGDLDLDSANEEESLEDNNEEE) is disordered.

The protein belongs to the universal ribosomal protein uS2 family.

This Trichodesmium erythraeum (strain IMS101) protein is Small ribosomal subunit protein uS2.